The primary structure comprises 475 residues: UDP-glycosyltransferase 708A6 (475 aa).

UDP-alpha-D-glucose contacts are provided by residues serine 286, 348–349, 366–374, and 388–391; these read WV, HCGWNSLTE, and FGDQ.

This sequence belongs to the UDP-glycosyltransferase family. As to expression, expressed in radicles, hypocotyls and juvenile leaves. Expressed at low levels in roots.

In terms of biological role, bifunctional glycosyltransferase that can produce both C- and O-glycosidated flavonoids. Converts 2-hydroxynaringenin to isovitexin. Converts eriodictyol to orientin and isoorientin. Converts naringenin and eriodictyol to naringenin 7-O-glucoside and eriodictyol 7-O-glucoside, respectively. This Zea mays (Maize) protein is UDP-glycosyltransferase 708A6.